The chain runs to 158 residues: Ribosome maturation factor RimP (158 aa).

This sequence belongs to the RimP family.

Its subcellular location is the cytoplasm. In terms of biological role, required for maturation of 30S ribosomal subunits. In Streptococcus uberis (strain ATCC BAA-854 / 0140J), this protein is Ribosome maturation factor RimP.